Here is a 193-residue protein sequence, read N- to C-terminus: MNYEIFKAIHGLSHHNSVLDSIMVFITEYAIVAYALILLAIWLFGNTQSRKHVLYAGITGIAGLVINYLITLVYFEPRPFVAHTVHTLIPHAADASFPSDHTTGALAISIAMLFRNRKIGWPLVIFGLLTGFSRIWVGHHYPVDVLGSLVVAIIIGFLFFRFSDLLRPFVDLVVRIYEAIINKLTKKPTDQNF.

4 helical membrane-spanning segments follow: residues 24 to 44 (VFITEYAIVAYALILLAIWLF), 53 to 73 (VLYAGITGIAGLVINYLITLV), 119 to 139 (IGWPLVIFGLLTGFSRIWVGH), and 140 to 160 (HYPVDVLGSLVVAIIIGFLFF).

The protein belongs to the BcrC/YbjG family.

The protein resides in the cell membrane. It carries out the reaction di-trans,octa-cis-undecaprenyl diphosphate + H2O = di-trans,octa-cis-undecaprenyl phosphate + phosphate + H(+). Catalyzes the dephosphorylation of undecaprenyl diphosphate (UPP). Confers resistance to bacitracin. The protein is Undecaprenyl-diphosphatase BcrC (bcrC) of Bacillus subtilis (strain 168).